An 86-amino-acid chain; its full sequence is Probable acyl carrier protein CCNA_01221 (86 aa).

The Carrier domain maps to 6-83; that stretch reads TVTDLSLREI…DLSKLINDLR (78 aa). Position 43 is an O-(pantetheine 4'-phosphoryl)serine (S43).

This sequence belongs to the acyl carrier protein (ACP) family.

It participates in lipid metabolism; sphingolipid metabolism. Its function is as follows. Involved in de novo bacterial ceramide synthesis. The protein is Probable acyl carrier protein CCNA_01221 of Caulobacter vibrioides (strain NA1000 / CB15N) (Caulobacter crescentus).